The chain runs to 453 residues: Bifunctional protein GlmU (453 aa).

The segment at 1–226 is pyrophosphorylase; it reads MKFSAVILAA…AIEVEGVNDR (226 aa). UDP-N-acetyl-alpha-D-glucosamine contacts are provided by residues 8–11, lysine 22, glutamine 73, 78–79, 100–102, glycine 137, glutamate 151, asparagine 166, and asparagine 224; these read LAAG, GT, and YGD. Aspartate 102 provides a ligand contact to Mg(2+). Residue asparagine 224 participates in Mg(2+) binding. The linker stretch occupies residues 227-247; sequence AQLARLERAFQSMQAQKLLEQ. The segment at 248–453 is N-acetyltransferase; it reads GVMLRDPARF…TGWQRPVKQK (206 aa). Residues arginine 330 and lysine 348 each coordinate UDP-N-acetyl-alpha-D-glucosamine. Residue histidine 360 is the Proton acceptor of the active site. The UDP-N-acetyl-alpha-D-glucosamine site is built by tyrosine 363 and asparagine 374. Residues alanine 377, 383–384, serine 402, alanine 420, and arginine 437 each bind acetyl-CoA; that span reads NY.

The protein in the N-terminal section; belongs to the N-acetylglucosamine-1-phosphate uridyltransferase family. It in the C-terminal section; belongs to the transferase hexapeptide repeat family. As to quaternary structure, homotrimer. Requires Mg(2+) as cofactor.

It localises to the cytoplasm. It carries out the reaction alpha-D-glucosamine 1-phosphate + acetyl-CoA = N-acetyl-alpha-D-glucosamine 1-phosphate + CoA + H(+). It catalyses the reaction N-acetyl-alpha-D-glucosamine 1-phosphate + UTP + H(+) = UDP-N-acetyl-alpha-D-glucosamine + diphosphate. The protein operates within nucleotide-sugar biosynthesis; UDP-N-acetyl-alpha-D-glucosamine biosynthesis; N-acetyl-alpha-D-glucosamine 1-phosphate from alpha-D-glucosamine 6-phosphate (route II): step 2/2. Its pathway is nucleotide-sugar biosynthesis; UDP-N-acetyl-alpha-D-glucosamine biosynthesis; UDP-N-acetyl-alpha-D-glucosamine from N-acetyl-alpha-D-glucosamine 1-phosphate: step 1/1. It functions in the pathway bacterial outer membrane biogenesis; LPS lipid A biosynthesis. Its function is as follows. Catalyzes the last two sequential reactions in the de novo biosynthetic pathway for UDP-N-acetylglucosamine (UDP-GlcNAc). The C-terminal domain catalyzes the transfer of acetyl group from acetyl coenzyme A to glucosamine-1-phosphate (GlcN-1-P) to produce N-acetylglucosamine-1-phosphate (GlcNAc-1-P), which is converted into UDP-GlcNAc by the transfer of uridine 5-monophosphate (from uridine 5-triphosphate), a reaction catalyzed by the N-terminal domain. The protein is Bifunctional protein GlmU of Vibrio campbellii (strain ATCC BAA-1116).